Reading from the N-terminus, the 366-residue chain is tRNA/tmRNA (uracil-C(5))-methyltransferase (366 aa).

The S-adenosyl-L-methionine site is built by Gln-190, Tyr-218, Asn-223, Glu-239, and Asp-299. Catalysis depends on Cys-324, which acts as the Nucleophile. Glu-358 serves as the catalytic Proton acceptor.

Belongs to the class I-like SAM-binding methyltransferase superfamily. RNA M5U methyltransferase family. TrmA subfamily.

The enzyme catalyses uridine(54) in tRNA + S-adenosyl-L-methionine = 5-methyluridine(54) in tRNA + S-adenosyl-L-homocysteine + H(+). It carries out the reaction uridine(341) in tmRNA + S-adenosyl-L-methionine = 5-methyluridine(341) in tmRNA + S-adenosyl-L-homocysteine + H(+). Functionally, dual-specificity methyltransferase that catalyzes the formation of 5-methyluridine at position 54 (m5U54) in all tRNAs, and that of position 341 (m5U341) in tmRNA (transfer-mRNA). This Escherichia coli (strain UTI89 / UPEC) protein is tRNA/tmRNA (uracil-C(5))-methyltransferase.